Here is a 510-residue protein sequence, read N- to C-terminus: GMP synthase [glutamine-hydrolyzing] (510 aa).

The Glutamine amidotransferase type-1 domain maps to 5 to 195 (KILVLDFGGQ…LFKVCGVKGT (191 aa)). Cysteine 82 acts as the Nucleophile in catalysis. Residues histidine 169 and glutamate 171 contribute to the active site. The 190-residue stretch at 196 to 385 (WNMADFINEE…LGLPDEIVWR (190 aa)) folds into the GMPS ATP-PPase domain. Position 223-229 (223-229 (SGGVDSA)) interacts with ATP.

Homodimer.

It catalyses the reaction XMP + L-glutamine + ATP + H2O = GMP + L-glutamate + AMP + diphosphate + 2 H(+). Its pathway is purine metabolism; GMP biosynthesis; GMP from XMP (L-Gln route): step 1/1. Functionally, catalyzes the synthesis of GMP from XMP. This is GMP synthase [glutamine-hydrolyzing] from Halothermothrix orenii (strain H 168 / OCM 544 / DSM 9562).